The following is a 200-amino-acid chain: UPF0301 protein BruAb1_0502 (200 aa).

It belongs to the UPF0301 (AlgH) family.

The polypeptide is UPF0301 protein BruAb1_0502 (Brucella abortus biovar 1 (strain 9-941)).